The sequence spans 290 residues: TP53-target gene 5 protein (290 aa).

Over residues 1 to 13 the composition is skewed to basic residues; that stretch reads MSPSAKKRPKNSR. Disordered stretches follow at residues 1 to 29 and 114 to 178; these read MSPS…TEQP and KLES…RQPL. Composition is skewed to basic and acidic residues over residues 16-26, 114-130, and 138-167; these read KMQDEKLRDET, KLES…KEWK, and RNKE…RDDS.

As to quaternary structure, interacts with p53/TP53. Highly expressed in heart, brain and small intestine. Less abundant in skeletal muscle, spleen, prostate, ovary and colon. A smaller transcript is expressed specifically in the testis.

The protein resides in the cytoplasm. It is found in the nucleus. May play a significant role in p53/TP53-mediating signaling pathway. This Homo sapiens (Human) protein is TP53-target gene 5 protein (TP53TG5).